The chain runs to 382 residues: Mannitol-1-phosphate 5-dehydrogenase (382 aa).

3 to 14 (ALHFGAGNIGRG) is an NAD(+) binding site. Lysine 269 is modified (N6-acetyllysine).

The protein belongs to the mannitol dehydrogenase family.

It carries out the reaction D-mannitol 1-phosphate + NAD(+) = beta-D-fructose 6-phosphate + NADH + H(+). This chain is Mannitol-1-phosphate 5-dehydrogenase, found in Escherichia coli O81 (strain ED1a).